Reading from the N-terminus, the 412-residue chain is Proteasome-activating nucleotidase (412 aa).

Positions Glu15 to Pro73 form a coiled coil. ATP-binding positions include Gly197–Leu202 and His336. Residues Met410–Ala412 are docks into pockets in the proteasome alpha-ring to cause gate opening.

The protein belongs to the AAA ATPase family. In terms of assembly, homohexamer. The hexameric complex has a two-ring architecture resembling a top hat that caps the 20S proteasome core at one or both ends. Upon ATP-binding, the C-terminus of PAN interacts with the alpha-rings of the proteasome core by binding to the intersubunit pockets.

The protein localises to the cytoplasm. In terms of biological role, ATPase which is responsible for recognizing, binding, unfolding and translocation of substrate proteins into the archaeal 20S proteasome core particle. Is essential for opening the gate of the 20S proteasome via an interaction with its C-terminus, thereby allowing substrate entry and access to the site of proteolysis. Thus, the C-termini of the proteasomal ATPase function like a 'key in a lock' to induce gate opening and therefore regulate proteolysis. Unfolding activity requires energy from ATP hydrolysis, whereas ATP binding alone promotes ATPase-20S proteasome association which triggers gate opening, and supports translocation of unfolded substrates. In Methanoculleus marisnigri (strain ATCC 35101 / DSM 1498 / JR1), this protein is Proteasome-activating nucleotidase.